Reading from the N-terminus, the 177-residue chain is Interleukin-10 (177 aa).

Residues 1 to 19 form the signal peptide; it reads MPSSSAVLCCLVFLAGVAA. 2 disulfide bridges follow: Cys-31–Cys-127 and Cys-81–Cys-133. The N-linked (GlcNAc...) asparagine glycan is linked to Asn-135.

It belongs to the IL-10 family. Homodimer. Interacts with IL10RA and IL10RB.

It localises to the secreted. Its function is as follows. Major immune regulatory cytokine that acts on many cells of the immune system where it has profound anti-inflammatory functions, limiting excessive tissue disruption caused by inflammation. Mechanistically, IL10 binds to its heterotetrameric receptor comprising IL10RA and IL10RB leading to JAK1 and STAT2-mediated phosphorylation of STAT3. In turn, STAT3 translocates to the nucleus where it drives expression of anti-inflammatory mediators. Targets antigen-presenting cells (APCs) such as macrophages and monocytes and inhibits their release of pro-inflammatory cytokines including granulocyte-macrophage colony-stimulating factor /GM-CSF, granulocyte colony-stimulating factor/G-CSF, IL-1 alpha, IL-1 beta, IL-6, IL-8 and TNF-alpha. Also interferes with antigen presentation by reducing the expression of MHC-class II and co-stimulatory molecules, thereby inhibiting their ability to induce T cell activation. In addition, controls the inflammatory response of macrophages by reprogramming essential metabolic pathways including mTOR signaling. This chain is Interleukin-10 (IL10), found in Ovis aries (Sheep).